The chain runs to 620 residues: Glutathione-regulated potassium-efflux system protein KefC (620 aa).

Helical transmembrane passes span H4–V24, L26–L46, S54–L74, G90–L110, V114–M134, F149–L169, M178–L198, V218–G238, G270–I290, L294–I314, W327–Q347, and S359–N379. Residues Q399–T518 form the RCK N-terminal domain. The disordered stretch occupies residues G597–S620.

It belongs to the monovalent cation:proton antiporter 2 (CPA2) transporter (TC 2.A.37) family. KefC subfamily. In terms of assembly, homodimer. Interacts with the regulatory subunit KefF.

The protein resides in the cell inner membrane. Pore-forming subunit of a potassium efflux system that confers protection against electrophiles. Catalyzes K(+)/H(+) antiport. The chain is Glutathione-regulated potassium-efflux system protein KefC from Escherichia coli (strain SMS-3-5 / SECEC).